The sequence spans 141 residues: Large ribosomal subunit protein uL16 (141 aa).

The protein belongs to the universal ribosomal protein uL16 family. In terms of assembly, part of the 50S ribosomal subunit.

Binds 23S rRNA and is also seen to make contacts with the A and possibly P site tRNAs. The polypeptide is Large ribosomal subunit protein uL16 (Hydrogenobaculum sp. (strain Y04AAS1)).